The primary structure comprises 319 residues: Biotin synthase (319 aa).

The region spanning 44–273 is the Radical SAM core domain; sequence IHGDGIDLCS…EAKIRLAGGR (230 aa). The [4Fe-4S] cluster site is built by cysteine 62, cysteine 66, and cysteine 69. [2Fe-2S] cluster-binding residues include serine 106, cysteine 138, cysteine 198, and arginine 268.

Belongs to the radical SAM superfamily. Biotin synthase family. In terms of assembly, homodimer. The cofactor is [4Fe-4S] cluster. Requires [2Fe-2S] cluster as cofactor.

The catalysed reaction is (4R,5S)-dethiobiotin + (sulfur carrier)-SH + 2 reduced [2Fe-2S]-[ferredoxin] + 2 S-adenosyl-L-methionine = (sulfur carrier)-H + biotin + 2 5'-deoxyadenosine + 2 L-methionine + 2 oxidized [2Fe-2S]-[ferredoxin]. It functions in the pathway cofactor biosynthesis; biotin biosynthesis; biotin from 7,8-diaminononanoate: step 2/2. Its function is as follows. Catalyzes the conversion of dethiobiotin (DTB) to biotin by the insertion of a sulfur atom into dethiobiotin via a radical-based mechanism. The protein is Biotin synthase of Clostridium perfringens (strain 13 / Type A).